The chain runs to 252 residues: Pantothenate synthetase (252 aa).

29 to 36 contacts ATP; sequence MGNLHAGH. H36 (proton donor) is an active-site residue. A (R)-pantoate-binding site is contributed by Q60. Q60 lines the beta-alanine pocket. Position 146–149 (146–149) interacts with ATP; the sequence is GEKD. Q152 contributes to the (R)-pantoate binding site. Residues V175 and 183–186 contribute to the ATP site; that span reads CSSR.

Belongs to the pantothenate synthetase family. Homodimer.

The protein resides in the cytoplasm. The enzyme catalyses (R)-pantoate + beta-alanine + ATP = (R)-pantothenate + AMP + diphosphate + H(+). It functions in the pathway cofactor biosynthesis; (R)-pantothenate biosynthesis; (R)-pantothenate from (R)-pantoate and beta-alanine: step 1/1. In terms of biological role, catalyzes the condensation of pantoate with beta-alanine in an ATP-dependent reaction via a pantoyl-adenylate intermediate. The sequence is that of Pantothenate synthetase from Legionella pneumophila (strain Lens).